The chain runs to 120 residues: Large ribosomal subunit protein bL12 (120 aa).

It belongs to the bacterial ribosomal protein bL12 family. As to quaternary structure, homodimer. Part of the ribosomal stalk of the 50S ribosomal subunit. Forms a multimeric L10(L12)X complex, where L10 forms an elongated spine to which 2 to 4 L12 dimers bind in a sequential fashion. Binds GTP-bound translation factors.

Functionally, forms part of the ribosomal stalk which helps the ribosome interact with GTP-bound translation factors. Is thus essential for accurate translation. This chain is Large ribosomal subunit protein bL12, found in Listeria monocytogenes serotype 4b (strain CLIP80459).